The sequence spans 366 residues: HTH-type transcriptional regulator MSMEG_6044/MSMEI_5883 (366 aa).

Positions A11 to T66 constitute an HTH lacI-type domain. Residues L13–N32 constitute a DNA-binding region (H-T-H motif).

Functionally, transcriptional regulator that negatively regulates transcription of the mce4 operon, which is involved in cholesterol transport and utilization. Acts by binding to the promoter region of the mce4 operon. The chain is HTH-type transcriptional regulator MSMEG_6044/MSMEI_5883 from Mycolicibacterium smegmatis (strain ATCC 700084 / mc(2)155) (Mycobacterium smegmatis).